A 205-amino-acid polypeptide reads, in one-letter code: High frequency lysogenization protein HflD homolog (205 aa).

It belongs to the HflD family.

It localises to the cytoplasm. Its subcellular location is the cell inner membrane. The sequence is that of High frequency lysogenization protein HflD homolog from Vibrio atlanticus (strain LGP32) (Vibrio splendidus (strain Mel32)).